Here is a 223-residue protein sequence, read N- to C-terminus: Deoxyribose-phosphate aldolase (223 aa).

Asp-91 (proton donor/acceptor) is an active-site residue. Lys-153 (schiff-base intermediate with acetaldehyde) is an active-site residue. Lys-182 (proton donor/acceptor) is an active-site residue.

This sequence belongs to the DeoC/FbaB aldolase family. DeoC type 1 subfamily.

The protein resides in the cytoplasm. The enzyme catalyses 2-deoxy-D-ribose 5-phosphate = D-glyceraldehyde 3-phosphate + acetaldehyde. Its pathway is carbohydrate degradation; 2-deoxy-D-ribose 1-phosphate degradation; D-glyceraldehyde 3-phosphate and acetaldehyde from 2-deoxy-alpha-D-ribose 1-phosphate: step 2/2. In terms of biological role, catalyzes a reversible aldol reaction between acetaldehyde and D-glyceraldehyde 3-phosphate to generate 2-deoxy-D-ribose 5-phosphate. The sequence is that of Deoxyribose-phosphate aldolase from Streptococcus pyogenes serotype M4 (strain MGAS10750).